The sequence spans 92 residues: Small ribosomal subunit protein uS19 (92 aa).

The protein belongs to the universal ribosomal protein uS19 family.

In terms of biological role, protein S19 forms a complex with S13 that binds strongly to the 16S ribosomal RNA. This chain is Small ribosomal subunit protein uS19, found in Neisseria meningitidis serogroup C (strain 053442).